Reading from the N-terminus, the 185-residue chain is Ribosome-recycling factor (185 aa).

The protein belongs to the RRF family.

The protein localises to the cytoplasm. Its function is as follows. Responsible for the release of ribosomes from messenger RNA at the termination of protein biosynthesis. May increase the efficiency of translation by recycling ribosomes from one round of translation to another. The chain is Ribosome-recycling factor from Pseudomonas fluorescens (strain ATCC BAA-477 / NRRL B-23932 / Pf-5).